Here is a 359-residue protein sequence, read N- to C-terminus: Phosphate acyltransferase (359 aa).

Belongs to the PlsX family. In terms of assembly, homodimer. Probably interacts with PlsY.

The protein resides in the cytoplasm. It carries out the reaction a fatty acyl-[ACP] + phosphate = an acyl phosphate + holo-[ACP]. It participates in lipid metabolism; phospholipid metabolism. In terms of biological role, catalyzes the reversible formation of acyl-phosphate (acyl-PO(4)) from acyl-[acyl-carrier-protein] (acyl-ACP). This enzyme utilizes acyl-ACP as fatty acyl donor, but not acyl-CoA. In Salmonella agona (strain SL483), this protein is Phosphate acyltransferase.